We begin with the raw amino-acid sequence, 433 residues long: Legumain (433 aa).

A signal peptide spans 1–17; the sequence is MVWKVAVFLSVALGIGA. N-linked (GlcNAc...) asparagine glycosylation is present at Asn-91. Residue His-148 is part of the active site. Asn-167 carries an N-linked (GlcNAc...) asparagine glycan. Cys-189 acts as the Nucleophile in catalysis. Residues Asn-263 and Asn-272 are each glycosylated (N-linked (GlcNAc...) asparagine). Residues 324–433 constitute a propeptide that is removed on maturation; it reads DLEESRQLTE…SMDHVCLGHY (110 aa). Intrachain disulfides connect Cys-378–Cys-412 and Cys-390–Cys-429.

This sequence belongs to the peptidase C13 family. Homodimer before autocatalytic removal of the propeptide. Monomer after autocatalytic processing. May interact with integrins. Activated by autocatalytic processing at pH 4. Ubiquitous. Particularly abundant in kidney, heart and placenta.

It is found in the lysosome. It catalyses the reaction Hydrolysis of proteins and small molecule substrates at -Asn-|-Xaa- bonds.. Inhibited by CST6. In terms of biological role, has a strict specificity for hydrolysis of asparaginyl bonds. Can also cleave aspartyl bonds slowly, especially under acidic conditions. Involved in the processing of proteins for MHC class II antigen presentation in the lysosomal/endosomal system. Also involved in MHC class I antigen presentation in cross-presenting dendritic cells by mediating cleavage and maturation of Perforin-2 (MPEG1), thereby promoting antigen translocation in the cytosol. Required for normal lysosomal protein degradation in renal proximal tubules. Required for normal degradation of internalized EGFR. Plays a role in the regulation of cell proliferation via its role in EGFR degradation. The protein is Legumain of Homo sapiens (Human).